The following is a 337-amino-acid chain: Centromere protein N (337 aa).

Phosphoserine is present on residues Ser-226 and Ser-233.

It belongs to the CENP-N/CHL4 family. As to quaternary structure, component of the CENPA-NAC complex, at least composed of CENPA, CENPC, CENPH, CENPM, CENPN, CENPT and CENPU. The CENPA-NAC complex interacts with the CENPA-CAD complex, composed of CENPI, CENPK, CENPL, CENPO, CENPP, CENPQ, CENPR and CENPS. Interacts directly with CENPA. Identified in a centromere complex containing histones H2A, H2B and H4, and at least CENPA, CENPB, CENPC, CENPT, CENPN, HJURP, SUPT16H, SSRP1 and RSF1.

The protein localises to the nucleus. Its subcellular location is the chromosome. It is found in the centromere. The protein resides in the kinetochore. Component of the CENPA-NAC (nucleosome-associated) complex, a complex that plays a central role in assembly of kinetochore proteins, mitotic progression and chromosome segregation. The CENPA-NAC complex recruits the CENPA-CAD (nucleosome distal) complex and may be involved in incorporation of newly synthesized CENPA into centromeres. CENPN is the first protein to bind specifically to CENPA nucleosomes and the direct binding of CENPA nucleosomes by CENPN is required for centromere assembly. Required for chromosome congression and efficiently align the chromosomes on a metaphase plate. This chain is Centromere protein N (Cenpn), found in Mus musculus (Mouse).